Reading from the N-terminus, the 157-residue chain is Small ribosomal subunit protein uS13 (157 aa).

It belongs to the universal ribosomal protein uS13 family. Part of the 30S ribosomal subunit. Forms a loose heterodimer with protein S19. Forms two bridges to the 50S subunit in the 70S ribosome.

Located at the top of the head of the 30S subunit, it contacts several helices of the 16S rRNA. In the 70S ribosome it contacts the 23S rRNA (bridge B1a) and protein L5 of the 50S subunit (bridge B1b), connecting the 2 subunits; these bridges are implicated in subunit movement. This chain is Small ribosomal subunit protein uS13, found in Thermofilum pendens (strain DSM 2475 / Hrk 5).